Reading from the N-terminus, the 1241-residue chain is MIHPVQVGKRTRMSFSKLDEIGVMPNLIEVQLDSYQWFLDNGLQEIFDDINPIQDYTGNLILEFIGYKLDMDNIKYSVEECKERDTTYAAPLKVKVRLLNKETGEVKEQEVFMGDFPLMTEQGTFIINGAERVIVSQLVRSPGAYYDYIVDKNGKKLFSATVIPNRGAWLEYETDSNSVIHVRIDKTRKLPITILVRAMGFGSDAEIVNYFGEEERLKATIEKDNTKTREEALLEIYKRLRPGEPPTVDSAFSLINSLFFDPKRYDLSRVGRYKFNKKLAVSIRIANKTAAKDIVNPETGEIIVEKGQRISKEKALEIQNSGINSVDISVDDNIIRVIGNNFVDIKSYIKFDISDLNIRELVYYPVLKEILENYTDEEAIKEQLKKNVHKLVPKHIIKDDMFATVSYELGLAYGIGNVDDIDHLGNRRVRSVGELLQNQFRIGLSRMERVVKERMTIQDQEVITPQALINIRPVAASIKEFFGSSQLSQFMDQINPLSELTHKRRLSALGPGGLSRERAGFEVRDVHHSHYGRMCPIETPEGPNIGLINSLATYAKVNEYGFVETPYRTVDKEQGRVTDEIHYITADEEDRCLIARANEALDENGYFIDKKITVRAPDEVLVVPANEVDLMDVSARQMVSVATAMIPFLENDDASRALMGSNMQRQAVPLLKPQAPVVGTGIEHKAAVDSGILPKARNAGVVEYVSANEVRVRRDSDGGVDTYRLLKFKRSNQGTCINQRPIVEKNEKVEKGTVLADGQSTDLGEIALGRNIRMGFITWEGYNYEDAMLISEQLVRDDVFTSIHIEEYEAEARDTKLGPEEITRDIPNVGEDALKDIDERGIIRIGAEVRSGDILVGKVTPKGETELTAEERLLRAIFGEKAREVRDTSLRVPHGEAGIIVDVKIFTRENGDELPPGVNELVRCYIAQKRKISVGDKMSGRHGNKGVISRVLPEEDMPFLPDGRPLQICLNPLGVPSRMNIGQVLEVHLGWAAANLGWHIATPVFDGALEPEIVECLKRAGYAEDGKTVLYDGRTGEAFDNRVTVGYMYILKLAHLVDDKIHARSTGPYSLVTQQPLGGKAQFGGQRFGEMEVWALEAYGAAHTLQEILTVKSDDVVGRVKTYEAIVKGENIPEPGIPEAFKVLIKELQALCLDVKVLSDNNNEIELKESIEDETEDLDVNIEGNEDSKVEPIRPQDVQENVSGENVDAGYENEDVDIDYEDLDIDDLKNGLGLEDFNDEH.

Positions 1195–1219 (PQDVQENVSGENVDAGYENEDVDID) are disordered.

Belongs to the RNA polymerase beta chain family. In terms of assembly, the RNAP catalytic core consists of 2 alpha, 1 beta, 1 beta' and 1 omega subunit. When a sigma factor is associated with the core the holoenzyme is formed, which can initiate transcription.

It catalyses the reaction RNA(n) + a ribonucleoside 5'-triphosphate = RNA(n+1) + diphosphate. DNA-dependent RNA polymerase catalyzes the transcription of DNA into RNA using the four ribonucleoside triphosphates as substrates. The polypeptide is DNA-directed RNA polymerase subunit beta (Clostridium acetobutylicum (strain ATCC 824 / DSM 792 / JCM 1419 / IAM 19013 / LMG 5710 / NBRC 13948 / NRRL B-527 / VKM B-1787 / 2291 / W)).